Consider the following 386-residue polypeptide: Glycerate dehydrogenase HPR, peroxisomal (386 aa).

NAD(+) is bound by residues 175–176 (RI), 271–273 (CSR), and Asp297. The active site involves Arg273. The active site involves Glu302. His320 (proton donor) is an active-site residue. 320–323 (HIAS) provides a ligand contact to NAD(+). Positions 384–386 (SKL) match the Microbody targeting signal motif.

This sequence belongs to the D-isomer specific 2-hydroxyacid dehydrogenase family. Present in leaves (at protein level). Mostly expressed in photosynthetic tissues such as leaves, stems, flowers, buds, and, to a lower extent, in siliques and roots.

Its subcellular location is the peroxisome. It carries out the reaction (R)-glycerate + NAD(+) = 3-hydroxypyruvate + NADH + H(+). It participates in photosynthesis; photorespiration; 3-phospho-D-glycerate from glycine: step 3/4. With respect to regulation, slightly inhibited by oxalate. Catalyzes the NADH-dependent reduction of hydroxypyruvate into glycerate in the photorespiratory core cycle. Mediates fatty acid beta-oxidation in germinating seeds when malate dehydrogenase is absent. The chain is Glycerate dehydrogenase HPR, peroxisomal (HPR) from Arabidopsis thaliana (Mouse-ear cress).